Here is a 27-residue protein sequence, read N- to C-terminus: Protamine-B (27 aa).

The tract at residues 1-27 (ARRRRRSSRPQRRRRRRRHGRRRRGRR) is disordered.

Testis.

It is found in the nucleus. Its subcellular location is the chromosome. Protamines substitute for histones in the chromatin of sperm during the haploid phase of spermatogenesis. They compact sperm DNA into a highly condensed, stable and inactive complex. The protein is Protamine-B of Acipenser stellatus (Sevruga).